The sequence spans 364 residues: DNA replication and repair protein RecF (364 aa).

30–37 (GLNAQGKS) serves as a coordination point for ATP.

Belongs to the RecF family.

It is found in the cytoplasm. Functionally, the RecF protein is involved in DNA metabolism; it is required for DNA replication and normal SOS inducibility. RecF binds preferentially to single-stranded, linear DNA. It also seems to bind ATP. The sequence is that of DNA replication and repair protein RecF from Caldanaerobacter subterraneus subsp. tengcongensis (strain DSM 15242 / JCM 11007 / NBRC 100824 / MB4) (Thermoanaerobacter tengcongensis).